The chain runs to 905 residues: Alanine--tRNA ligase (905 aa).

The Zn(2+) site is built by His569, His573, Cys693, and His697.

It belongs to the class-II aminoacyl-tRNA synthetase family. Zn(2+) serves as cofactor.

It localises to the cytoplasm. The catalysed reaction is tRNA(Ala) + L-alanine + ATP = L-alanyl-tRNA(Ala) + AMP + diphosphate. Functionally, catalyzes the attachment of alanine to tRNA(Ala) in a two-step reaction: alanine is first activated by ATP to form Ala-AMP and then transferred to the acceptor end of tRNA(Ala). Also edits incorrectly charged Ser-tRNA(Ala) and Gly-tRNA(Ala) via its editing domain. The chain is Alanine--tRNA ligase from Roseiflexus sp. (strain RS-1).